Consider the following 281-residue polypeptide: Bifunctional protein FolD 1 (281 aa).

Residues 165–167 (GRS), S190, and I231 each bind NADP(+).

This sequence belongs to the tetrahydrofolate dehydrogenase/cyclohydrolase family. Homodimer.

It catalyses the reaction (6R)-5,10-methylene-5,6,7,8-tetrahydrofolate + NADP(+) = (6R)-5,10-methenyltetrahydrofolate + NADPH. The catalysed reaction is (6R)-5,10-methenyltetrahydrofolate + H2O = (6R)-10-formyltetrahydrofolate + H(+). Its pathway is one-carbon metabolism; tetrahydrofolate interconversion. In terms of biological role, catalyzes the oxidation of 5,10-methylenetetrahydrofolate to 5,10-methenyltetrahydrofolate and then the hydrolysis of 5,10-methenyltetrahydrofolate to 10-formyltetrahydrofolate. This Desulfitobacterium hafniense (strain Y51) protein is Bifunctional protein FolD 1.